The following is a 108-amino-acid chain: Tubulin-specific chaperone A (108 aa).

At Ala2 the chain carries N-acetylalanine.

This sequence belongs to the TBCA family. In terms of assembly, supercomplex made of cofactors A to E. Cofactors A and D function by capturing and stabilizing tubulin in a quasi-native conformation. Cofactor E binds to the cofactor D-tubulin complex; interaction with cofactor C then causes the release of tubulin polypeptides that are committed to the native state. As to expression, widely expressed, but is most abundant in the testis.

It localises to the cytoplasm. It is found in the cytoskeleton. Its function is as follows. Tubulin-folding protein; involved in the early step of the tubulin folding pathway. The protein is Tubulin-specific chaperone A (TBCA) of Bos taurus (Bovine).